A 150-amino-acid polypeptide reads, in one-letter code: Snaclec 7 (150 aa).

Positions 1–23 (MGRFISISFGLLVVFLSLSGTGA) are cleaved as a signal peptide. 3 disulfide bridges follow: Cys-27-Cys-38, Cys-55-Cys-144, and Cys-121-Cys-136. One can recognise a C-type lectin domain in the interval 34 to 145 (YEGYCYKVFN…CNDPRYFVCK (112 aa)).

Belongs to the snaclec family. In terms of assembly, heterodimer; disulfide-linked.

The protein localises to the secreted. Interferes with one step of hemostasis (modulation of platelet aggregation, or coagulation cascade, for example). The polypeptide is Snaclec 7 (Daboia siamensis (Eastern Russel's viper)).